The chain runs to 743 residues: Phosphoribosylformylglycinamidine synthase subunit PurL (743 aa).

Histidine 50 is an active-site residue. Positions 53 and 92 each coordinate ATP. Position 94 (glutamate 94) interacts with Mg(2+). Substrate is bound by residues 95 to 98 and arginine 117; that span reads SHNH. Histidine 96 serves as the catalytic Proton acceptor. A Mg(2+)-binding site is contributed by aspartate 118. Glutamine 241 lines the substrate pocket. Aspartate 269 lines the Mg(2+) pocket. Substrate is bound at residue 313–315; it reads ESQ. Aspartate 495 and glycine 532 together coordinate ATP. Asparagine 533 is a Mg(2+) binding site. Serine 535 is a binding site for substrate.

Belongs to the FGAMS family. In terms of assembly, monomer. Part of the FGAM synthase complex composed of 1 PurL, 1 PurQ and 2 PurS subunits.

It is found in the cytoplasm. The enzyme catalyses N(2)-formyl-N(1)-(5-phospho-beta-D-ribosyl)glycinamide + L-glutamine + ATP + H2O = 2-formamido-N(1)-(5-O-phospho-beta-D-ribosyl)acetamidine + L-glutamate + ADP + phosphate + H(+). The protein operates within purine metabolism; IMP biosynthesis via de novo pathway; 5-amino-1-(5-phospho-D-ribosyl)imidazole from N(2)-formyl-N(1)-(5-phospho-D-ribosyl)glycinamide: step 1/2. In terms of biological role, part of the phosphoribosylformylglycinamidine synthase complex involved in the purines biosynthetic pathway. Catalyzes the ATP-dependent conversion of formylglycinamide ribonucleotide (FGAR) and glutamine to yield formylglycinamidine ribonucleotide (FGAM) and glutamate. The FGAM synthase complex is composed of three subunits. PurQ produces an ammonia molecule by converting glutamine to glutamate. PurL transfers the ammonia molecule to FGAR to form FGAM in an ATP-dependent manner. PurS interacts with PurQ and PurL and is thought to assist in the transfer of the ammonia molecule from PurQ to PurL. The polypeptide is Phosphoribosylformylglycinamidine synthase subunit PurL (Rhizobium etli (strain ATCC 51251 / DSM 11541 / JCM 21823 / NBRC 15573 / CFN 42)).